The primary structure comprises 323 residues: Serine/threonine-protein phosphatase PP1-gamma catalytic subunit (323 aa).

Alanine 2 is subject to N-acetylalanine. Mn(2+) contacts are provided by aspartate 64, histidine 66, aspartate 92, and asparagine 124. Histidine 125 functions as the Proton donor in the catalytic mechanism. The Mn(2+) site is built by histidine 173 and histidine 248. Residues lysine 302–lysine 323 are disordered. Residues threonine 307 and threonine 311 each carry the phosphothreonine modification.

Belongs to the PPP phosphatase family. PP-1 subfamily. As to quaternary structure, PP1 comprises a catalytic subunit, PPP1CA, PPP1CB or PPP1CC, which is folded into its native form by inhibitor 2 and glycogen synthetase kinase 3, and then complexed to one or several targeting or regulatory subunits. PPP1R12A, PPP1R12B and PPP1R12C mediate binding to myosin. PPP1R3A (in skeletal muscle), PPP1R3B (in sliver), PPP1R3C, PPP1R3D and PPP1R3F (in brain) mediate binding to glycogen. PPP1R15A and PPP1R15B mediate binding to EIF2S1. Part of a complex containing PPP1R15B, PP1 and NCK1/2. Interacts with PPP1R3B, PPP1R7 and CDCA2. Isoform 2 interacts with SPZ1. Interacts with IKFZ1; the interaction targets PPP1CC to pericentromeric heterochromatin, dephosphorylates IKAROS, stabilizes it and prevents it from degradation. Interacts with NOM1 and PPP1R8. Component of the PTW/PP1 phosphatase complex, composed of PPP1R10/PNUTS, TOX4, WDR82, and PPP1CA or PPP1CB or PPP1CC. Interacts with PPP1R8. Interacts with NEK2. Interacts with URI1; the interaction is phosphorylation-dependent and occurs in a growth factor-dependent manner. Interacts with FOXP3. Interacts with TMEM225 (via RVxF motif). Interacts with MKI67. Interacts with RRP1B; this targets PPP1CC to the nucleolus. Found in a complex with PPP1CA, PPP1CC, SHC1 and PEAK1. Interacts with DYNLT4. Interacts (via RVxF motif) with FIRRM; regulates PLK1 kinase activity. Interacts with the KNL1 complex subunit KNL1; the interaction is direct and mutually exclusive with KNL1 binding to microtubules. Component of the SHOC2-MRAS-PP1c (SMP) complex consisting of SHOC2, GTP-bound M-Ras/MRAS and the catalytic subunit of protein phosphatase 1 (either PPP1CA, PPP1CB or PPP1CC). SHOC2 and PP1c preferably bind M-Ras/MRAS, but they also bind K-Ras/KRAS, N-Ras/NRAS and H-Ras/HRAS; these interactions are GTP-dependent and both SHOC2 and PP1c are required to form a stable complex. Interacts with SHOC2 in the absence of Ras GTPases. It depends on Mn(2+) as a cofactor. Post-translationally, phosphorylated by NEK2. As to expression, isoform 2 is expressed only in testis, in the late spermatocytes and early spematids (at protein level).

The protein localises to the cytoplasm. It localises to the nucleus. The protein resides in the cleavage furrow. It is found in the nucleolus. Its subcellular location is the nucleoplasm. The protein localises to the chromosome. It localises to the centromere. The protein resides in the kinetochore. It is found in the nucleus speckle. Its subcellular location is the midbody. The protein localises to the mitochondrion. It localises to the cytoskeleton. The protein resides in the microtubule organizing center. It catalyses the reaction O-phospho-L-seryl-[protein] + H2O = L-seryl-[protein] + phosphate. The enzyme catalyses O-phospho-L-threonyl-[protein] + H2O = L-threonyl-[protein] + phosphate. With respect to regulation, inactivated by binding to URI1. Protein phosphatase that associates with over 200 regulatory proteins to form highly specific holoenzymes which dephosphorylate hundreds of biological targets. Protein phosphatase 1 (PP1) is essential for cell division, and participates in the regulation of glycogen metabolism, muscle contractility and protein synthesis. Dephosphorylates RPS6KB1. Involved in regulation of ionic conductances and long-term synaptic plasticity. May play an important role in dephosphorylating substrates such as the postsynaptic density-associated Ca(2+)/calmodulin dependent protein kinase II. Component of the PTW/PP1 phosphatase complex, which plays a role in the control of chromatin structure and cell cycle progression during the transition from mitosis into interphase. In balance with CSNK1D and CSNK1E, determines the circadian period length, through the regulation of the speed and rhythmicity of PER1 and PER2 phosphorylation. May dephosphorylate CSNK1D and CSNK1E. Regulates the recruitment of the SKA complex to kinetochores. Core component of the SHOC2-MRAS-PP1c (SMP) holophosphatase complex that regulates the MAPK pathway activation. Dephosphorylates MKI67 at the onset of anaphase. The SMP complex specifically dephosphorylates the inhibitory phosphorylation at 'Ser-259' of RAF1 kinase, 'Ser-365' of BRAF kinase and 'Ser-214' of ARAF kinase, stimulating their kinase activities. The SMP complex enhances the dephosphorylation activity and substrate specificity of PP1c. In terms of biological role, required for normal male fertility. The sequence is that of Serine/threonine-protein phosphatase PP1-gamma catalytic subunit (Ppp1cc) from Rattus norvegicus (Rat).